A 288-amino-acid chain; its full sequence is Acetyl-coenzyme A carboxylase carboxyl transferase subunit beta (288 aa).

Residues 33 to 288 (LFSQCPGCKH…LVRLHGGSPR (256 aa)) enclose the CoA carboxyltransferase N-terminal domain. Zn(2+) contacts are provided by C37, C40, C55, and C58. The segment at 37 to 58 (CPGCKHTIYQKDLGSERICPHC) adopts a C4-type zinc-finger fold.

It belongs to the AccD/PCCB family. Acetyl-CoA carboxylase is a heterohexamer composed of biotin carboxyl carrier protein (AccB), biotin carboxylase (AccC) and two subunits each of ACCase subunit alpha (AccA) and ACCase subunit beta (AccD). Zn(2+) serves as cofactor.

The protein localises to the cytoplasm. It catalyses the reaction N(6)-carboxybiotinyl-L-lysyl-[protein] + acetyl-CoA = N(6)-biotinyl-L-lysyl-[protein] + malonyl-CoA. It functions in the pathway lipid metabolism; malonyl-CoA biosynthesis; malonyl-CoA from acetyl-CoA: step 1/1. In terms of biological role, component of the acetyl coenzyme A carboxylase (ACC) complex. Biotin carboxylase (BC) catalyzes the carboxylation of biotin on its carrier protein (BCCP) and then the CO(2) group is transferred by the transcarboxylase to acetyl-CoA to form malonyl-CoA. The protein is Acetyl-coenzyme A carboxylase carboxyl transferase subunit beta of Streptococcus pneumoniae serotype 4 (strain ATCC BAA-334 / TIGR4).